We begin with the raw amino-acid sequence, 209 residues long: Uracil phosphoribosyltransferase (209 aa).

5-phospho-alpha-D-ribose 1-diphosphate is bound by residues Arg79, Arg104, and Asp131 to Ser139. Uracil-binding positions include Ile194 and Gly199–Ala201. Residue Asp200 coordinates 5-phospho-alpha-D-ribose 1-diphosphate.

Belongs to the UPRTase family. It depends on Mg(2+) as a cofactor.

The catalysed reaction is UMP + diphosphate = 5-phospho-alpha-D-ribose 1-diphosphate + uracil. Its pathway is pyrimidine metabolism; UMP biosynthesis via salvage pathway; UMP from uracil: step 1/1. Allosterically activated by GTP. Functionally, catalyzes the conversion of uracil and 5-phospho-alpha-D-ribose 1-diphosphate (PRPP) to UMP and diphosphate. This is Uracil phosphoribosyltransferase from Citrifermentans bemidjiense (strain ATCC BAA-1014 / DSM 16622 / JCM 12645 / Bem) (Geobacter bemidjiensis).